The following is a 163-amino-acid chain: Large ribosomal subunit protein uL11 (163 aa).

Belongs to the universal ribosomal protein uL11 family. In terms of assembly, part of the ribosomal stalk of the 50S ribosomal subunit. Interacts with L10 and the large rRNA to form the base of the stalk. L10 forms an elongated spine to which L12 dimers bind in a sequential fashion forming a multimeric L10(L12)X complex.

Functionally, forms part of the ribosomal stalk which helps the ribosome interact with GTP-bound translation factors. The chain is Large ribosomal subunit protein uL11 from Thermococcus onnurineus (strain NA1).